We begin with the raw amino-acid sequence, 117 residues long: Large ribosomal subunit protein uL18 (117 aa).

It belongs to the universal ribosomal protein uL18 family. Part of the 50S ribosomal subunit; part of the 5S rRNA/L5/L18/L25 subcomplex. Contacts the 5S and 23S rRNAs.

Its function is as follows. This is one of the proteins that bind and probably mediate the attachment of the 5S RNA into the large ribosomal subunit, where it forms part of the central protuberance. This is Large ribosomal subunit protein uL18 from Haemophilus ducreyi (strain 35000HP / ATCC 700724).